We begin with the raw amino-acid sequence, 181 residues long: Endoribonuclease YbeY (181 aa).

3 residues coordinate Zn(2+): His-115, His-119, and His-125.

This sequence belongs to the endoribonuclease YbeY family. Zn(2+) is required as a cofactor.

It is found in the cytoplasm. Its function is as follows. Single strand-specific metallo-endoribonuclease involved in late-stage 70S ribosome quality control and in maturation of the 3' terminus of the 16S rRNA. The polypeptide is Endoribonuclease YbeY (Bifidobacterium animalis subsp. lactis (strain AD011)).